The sequence spans 262 residues: Acyl-[acyl-carrier-protein]--UDP-N-acetylglucosamine O-acyltransferase (262 aa).

Belongs to the transferase hexapeptide repeat family. LpxA subfamily. As to quaternary structure, homotrimer.

The protein localises to the cytoplasm. It carries out the reaction a (3R)-hydroxyacyl-[ACP] + UDP-N-acetyl-alpha-D-glucosamine = a UDP-3-O-[(3R)-3-hydroxyacyl]-N-acetyl-alpha-D-glucosamine + holo-[ACP]. It participates in glycolipid biosynthesis; lipid IV(A) biosynthesis; lipid IV(A) from (3R)-3-hydroxytetradecanoyl-[acyl-carrier-protein] and UDP-N-acetyl-alpha-D-glucosamine: step 1/6. Functionally, involved in the biosynthesis of lipid A, a phosphorylated glycolipid that anchors the lipopolysaccharide to the outer membrane of the cell. The polypeptide is Acyl-[acyl-carrier-protein]--UDP-N-acetylglucosamine O-acyltransferase (Burkholderia lata (strain ATCC 17760 / DSM 23089 / LMG 22485 / NCIMB 9086 / R18194 / 383)).